The sequence spans 360 residues: Glyceraldehyde-3-phosphate dehydrogenase (360 aa).

Residues 13 to 14 (RI), aspartate 35, and arginine 82 contribute to the NAD(+) site. Residues 153 to 155 (SCT), threonine 184, 213 to 214 (TG), and arginine 236 each bind D-glyceraldehyde 3-phosphate. The Nucleophile role is filled by cysteine 154. Position 318 (asparagine 318) interacts with NAD(+).

This sequence belongs to the glyceraldehyde-3-phosphate dehydrogenase family. As to quaternary structure, homotetramer.

The catalysed reaction is D-glyceraldehyde 3-phosphate + phosphate + NAD(+) = (2R)-3-phospho-glyceroyl phosphate + NADH + H(+). The protein operates within carbohydrate degradation; glycolysis; pyruvate from D-glyceraldehyde 3-phosphate: step 1/5. In terms of biological role, key enzyme in glycolysis that catalyzes the first step of the pathway by converting D-glyceraldehyde 3-phosphate (G3P) into 3-phospho-D-glyceroyl phosphate. Essential for the maintenance of cellular ATP levels and carbohydrate metabolism. This is Glyceraldehyde-3-phosphate dehydrogenase from Atriplex nummularia (Old man saltbush).